Reading from the N-terminus, the 310-residue chain is Retrotransposon Gag-like protein 4 (310 aa).

The segment at 278–295 adopts a CCHC-type zinc-finger fold; that stretch reads QLCLYCSQSGHFTRDCLA.

Functionally, involved in cognitive function in the brain, possibly via the noradrenergic system. This chain is Retrotransposon Gag-like protein 4, found in Homo sapiens (Human).